The primary structure comprises 434 residues: DNA primase DnaG (434 aa).

The Toprim domain occupies 171 to 250 (DAIIIVEGRA…AFSPRRRSVE (80 aa)). 3 residues coordinate Mg(2+): Glu-177, Asp-219, and Asp-221. The tract at residues 290-319 (GEEEHSSVSQKEEGNNTTPDVPADLPEEPP) is disordered. Basic and acidic residues predominate over residues 292–303 (EEHSSVSQKEEG).

It belongs to the archaeal DnaG primase family. In terms of assembly, forms a ternary complex with MCM helicase and DNA. The cofactor is Mg(2+).

The catalysed reaction is ssDNA + n NTP = ssDNA/pppN(pN)n-1 hybrid + (n-1) diphosphate.. Functionally, RNA polymerase that catalyzes the synthesis of short RNA molecules used as primers for DNA polymerase during DNA replication. This is DNA primase DnaG from Methanocorpusculum labreanum (strain ATCC 43576 / DSM 4855 / Z).